Consider the following 159-residue polypeptide: Cyclic pyranopterin monophosphate synthase (159 aa).

Substrate contacts are provided by residues 74–76 (MCH) and 112–113 (ME). Asp-127 is a catalytic residue.

This sequence belongs to the MoaC family. Homohexamer; trimer of dimers.

The enzyme catalyses (8S)-3',8-cyclo-7,8-dihydroguanosine 5'-triphosphate = cyclic pyranopterin phosphate + diphosphate. The protein operates within cofactor biosynthesis; molybdopterin biosynthesis. In terms of biological role, catalyzes the conversion of (8S)-3',8-cyclo-7,8-dihydroguanosine 5'-triphosphate to cyclic pyranopterin monophosphate (cPMP). In Helicobacter hepaticus (strain ATCC 51449 / 3B1), this protein is Cyclic pyranopterin monophosphate synthase.